The chain runs to 96 residues: Small ribosomal subunit protein bS6 (96 aa).

It belongs to the bacterial ribosomal protein bS6 family.

Functionally, binds together with bS18 to 16S ribosomal RNA. The chain is Small ribosomal subunit protein bS6 from Acidothermus cellulolyticus (strain ATCC 43068 / DSM 8971 / 11B).